A 209-amino-acid polypeptide reads, in one-letter code: Small ribosomal subunit protein uS4 (209 aa).

Positions 22 to 45 (RGRNPLLRKPNPPGQHGMQRKKKS) are disordered. Residues 93–154 (CRLDNIVYRL…KSRRLAIVTE (62 aa)) enclose the S4 RNA-binding domain.

Belongs to the universal ribosomal protein uS4 family. In terms of assembly, part of the 30S ribosomal subunit. Contacts protein S5. The interaction surface between S4 and S5 is involved in control of translational fidelity.

One of the primary rRNA binding proteins, it binds directly to 16S rRNA where it nucleates assembly of the body of the 30S subunit. In terms of biological role, with S5 and S12 plays an important role in translational accuracy. This is Small ribosomal subunit protein uS4 from Chlamydia muridarum (strain MoPn / Nigg).